Reading from the N-terminus, the 258-residue chain is Phosphoribosylaminoimidazole-succinocarboxamide synthase (258 aa).

Belongs to the SAICAR synthetase family.

The enzyme catalyses 5-amino-1-(5-phospho-D-ribosyl)imidazole-4-carboxylate + L-aspartate + ATP = (2S)-2-[5-amino-1-(5-phospho-beta-D-ribosyl)imidazole-4-carboxamido]succinate + ADP + phosphate + 2 H(+). Its pathway is purine metabolism; IMP biosynthesis via de novo pathway; 5-amino-1-(5-phospho-D-ribosyl)imidazole-4-carboxamide from 5-amino-1-(5-phospho-D-ribosyl)imidazole-4-carboxylate: step 1/2. This Sphingopyxis alaskensis (strain DSM 13593 / LMG 18877 / RB2256) (Sphingomonas alaskensis) protein is Phosphoribosylaminoimidazole-succinocarboxamide synthase.